A 211-amino-acid chain; its full sequence is Thiamine-phosphate synthase (211 aa).

Residues 37 to 41 (QLRIK) and Asn-69 each bind 4-amino-2-methyl-5-(diphosphooxymethyl)pyrimidine. Mg(2+) is bound by residues Asp-70 and Asp-89. Ser-108 contributes to the 4-amino-2-methyl-5-(diphosphooxymethyl)pyrimidine binding site. Residue 134–136 (TQT) participates in 2-[(2R,5Z)-2-carboxy-4-methylthiazol-5(2H)-ylidene]ethyl phosphate binding. Lys-137 contacts 4-amino-2-methyl-5-(diphosphooxymethyl)pyrimidine. 2-[(2R,5Z)-2-carboxy-4-methylthiazol-5(2H)-ylidene]ethyl phosphate is bound by residues Gly-166 and 186-187 (VS).

It belongs to the thiamine-phosphate synthase family. It depends on Mg(2+) as a cofactor.

It catalyses the reaction 2-[(2R,5Z)-2-carboxy-4-methylthiazol-5(2H)-ylidene]ethyl phosphate + 4-amino-2-methyl-5-(diphosphooxymethyl)pyrimidine + 2 H(+) = thiamine phosphate + CO2 + diphosphate. It carries out the reaction 2-(2-carboxy-4-methylthiazol-5-yl)ethyl phosphate + 4-amino-2-methyl-5-(diphosphooxymethyl)pyrimidine + 2 H(+) = thiamine phosphate + CO2 + diphosphate. The enzyme catalyses 4-methyl-5-(2-phosphooxyethyl)-thiazole + 4-amino-2-methyl-5-(diphosphooxymethyl)pyrimidine + H(+) = thiamine phosphate + diphosphate. The protein operates within cofactor biosynthesis; thiamine diphosphate biosynthesis; thiamine phosphate from 4-amino-2-methyl-5-diphosphomethylpyrimidine and 4-methyl-5-(2-phosphoethyl)-thiazole: step 1/1. Condenses 4-methyl-5-(beta-hydroxyethyl)thiazole monophosphate (THZ-P) and 2-methyl-4-amino-5-hydroxymethyl pyrimidine pyrophosphate (HMP-PP) to form thiamine monophosphate (TMP). This is Thiamine-phosphate synthase from Citrobacter koseri (strain ATCC BAA-895 / CDC 4225-83 / SGSC4696).